The primary structure comprises 2070 residues: Multiple PDZ domain protein (2070 aa).

The L27 domain maps to 1-63; that stretch reads MLEAIDKNRA…SVQQLKDQVN (63 aa). The PDZ 1 domain maps to 137 to 224; it reads VFELLKPPSG…TVQLVIARGS (88 aa). Serine 230 carries the post-translational modification Phosphoserine. PDZ domains are found at residues 257–337 and 377–463; these read TIEL…ARGA and DVEL…MRRG. Residue serine 483 is modified to Phosphoserine. PDZ domains are found at residues 553-634 and 700-786; these read VAHV…CRRT and HIEL…VAKP. Phosphoserine occurs at positions 790 and 1078. The PDZ 6 domain maps to 1008–1089; that stretch reads TINIAKGNSS…IGPDIKITYV (82 aa). The disordered stretch occupies residues 1121–1140; that stretch reads DIPELPEREEGEGEESELQN. The 93-residue stretch at 1151–1243 folds into the PDZ 7 domain; it reads RVELWREPSK…PVVFMVQSII (93 aa). Arginine 1170 is modified (omega-N-methylarginine). The interval 1278 to 1324 is disordered; the sequence is ADKAPSQSESEPEKAPLCSVPPPPPSAFAEMGSDHTQSSASKISQDV. Over residues 1311-1321 the composition is skewed to polar residues; it reads DHTQSSASKIS. 2 PDZ domains span residues 1350 to 1433 and 1483 to 1564; these read MIEL…IRNK and HLEL…HAEN. The disordered stretch occupies residues 1567 to 1612; it reads SQAVPSAAGAASGEKKNSSQSLMVPQSGSPEPESIRNTSRSSTPAI. Residues 1584–1610 are compositionally biased toward polar residues; that stretch reads SSQSLMVPQSGSPEPESIRNTSRSSTP. PDZ domains follow at residues 1629–1712 and 1725–1807; these read TIEI…YRDE and TIEL…GRIK. 2 positions are modified to phosphoserine: serine 1818 and serine 1824. PDZ domains are found at residues 1862-1948 and 1987-2070; these read TVEM…VAGG and SITL…MVLS.

As to quaternary structure, interacts with CLDN5, DLG4, GRIN1, F11R/JAM, CLDN1, NG2, CRB1, MPP4 and PALS1. Interacts with HTR2A, HTR2B, HTR2C, PLEKHA1/TAPP1, PLEKHA2/TAPP2, CXADR, SYNGAP1, CAMK2A and CAMK2B. Interacts with FAT4 (via cytoplasmic domain). Interacts with DLL1. In terms of assembly, (Microbial infection) Interacts with human adenovirus type 9 E4-ORF1 protein. (Microbial infection) Interacts with human papillomavirus 18/HPV18 protein E6. Expressed in heart, brain, placenta, liver, skeletal muscle, kidney and pancreas.

The protein localises to the cell membrane. The protein resides in the apical cell membrane. It is found in the postsynaptic density. Its subcellular location is the cell projection. It localises to the dendrite. The protein localises to the cell junction. The protein resides in the tight junction. It is found in the synapse. Its subcellular location is the synaptosome. Functionally, member of the NMDAR signaling complex that may play a role in control of AMPAR potentiation and synaptic plasticity in excitatory synapses. Promotes clustering of HT2RC at the cell surface. This is Multiple PDZ domain protein (MPDZ) from Homo sapiens (Human).